Consider the following 239-residue polypeptide: O-methyltransferase ankF (239 aa).

S-adenosyl-L-methionine is bound by residues glutamate 71, 73-74 (GT), serine 79, glutamate 98, and alanine 127.

Belongs to the class I-like SAM-binding methyltransferase superfamily. Cation-dependent O-methyltransferase family.

The catalysed reaction is NK13650 B + S-adenosyl-L-methionine = NK13650 D + S-adenosyl-L-homocysteine + H(+). Its pathway is secondary metabolite biosynthesis. In terms of biological role, O-methyltransferase; part of the ank cluster that mediates the biosynthesis of NK13650 C, a highly modified cyclo-arginine-tyrosine dipeptide. AnkF converts NK13650 B to produce NK13650 D via methylation of the C-17 phenol group. Within the pathway, the cyclodipeptide synthase ankA acts as the scaffold-generating enzyme and is responsible for formation of the cyclo-Arg-Tyr diketopiperazine (cRY) from L-Arg and L-Tyr. The ankA product cRY is desaturated by the cytochrome P450 monooxygenase ankB to yield a dehydro-cyclodipeptide intermediate. The FAD-dependent monooxygenase ankC then installs the m-OH, ankD catalyzes the attachment of L-homoserine, and ankE ligates citrate to the ankD product to yield NK13650 B. The O-methyltransferase ankF is responsible for methylation of the C-17 phenol group of NK13650 B to produce NK13650 D. Amidation of NK13650 D with L-Asp by ankG then leads to the production of NK13650 C, whereas amidation of NK13650 B produces NK13650 A. This Aspergillus thermomutatus (Neosartorya pseudofischeri) protein is O-methyltransferase ankF.